The primary structure comprises 34 residues: Toxin Ptu1 (34 aa).

Cystine bridges form between C5/C20, C12/C26, and C19/C33.

It is found in the secreted. In terms of biological role, binds reversibly and blocks N-type voltage-gated calcium channels (Cav). The polypeptide is Toxin Ptu1 (Peirates turpis (Assassin bug)).